We begin with the raw amino-acid sequence, 340 residues long: Phenylalanine--tRNA ligase alpha subunit (340 aa).

Position 255 (Glu255) interacts with Mg(2+).

This sequence belongs to the class-II aminoacyl-tRNA synthetase family. Phe-tRNA synthetase alpha subunit type 1 subfamily. In terms of assembly, tetramer of two alpha and two beta subunits. The cofactor is Mg(2+).

The protein localises to the cytoplasm. It catalyses the reaction tRNA(Phe) + L-phenylalanine + ATP = L-phenylalanyl-tRNA(Phe) + AMP + diphosphate + H(+). The protein is Phenylalanine--tRNA ligase alpha subunit of Moorella thermoacetica (strain ATCC 39073 / JCM 9320).